The primary structure comprises 335 residues: Peroxidase 53 (335 aa).

A signal peptide spans 1-30; the sequence is MAVTNLPTCDGLFIISLIVIVSSIFGTSSA. Glutamine 31 bears the Pyrrolidone carboxylic acid mark. N-linked (GlcNAc...) asparagine glycans are attached at residues asparagine 33 and asparagine 43. 4 cysteine pairs are disulfide-bonded: cysteine 41–cysteine 121, cysteine 74–cysteine 79, cysteine 127–cysteine 329, and cysteine 206–cysteine 238. The Proton acceptor role is filled by histidine 72. Residues aspartate 73, valine 76, glycine 78, aspartate 80, and serine 82 each contribute to the Ca(2+) site. N-linked (GlcNAc...) asparagine glycosylation is present at asparagine 165. Proline 169 serves as a coordination point for substrate. Asparagine 177 carries N-linked (GlcNAc...) asparagine glycosylation. Histidine 199 lines the heme b pocket. Residue threonine 200 coordinates Ca(2+). N-linked (GlcNAc...) asparagine glycans are attached at residues asparagine 215, asparagine 227, and asparagine 241. Residues aspartate 251, threonine 254, and aspartate 259 each coordinate Ca(2+). N-linked (GlcNAc...) asparagine glycosylation is present at asparagine 297.

It belongs to the peroxidase family. Classical plant (class III) peroxidase subfamily. Ca(2+) serves as cofactor. Requires heme b as cofactor. Mainly expressed in roots.

It is found in the secreted. It carries out the reaction 2 a phenolic donor + H2O2 = 2 a phenolic radical donor + 2 H2O. Its function is as follows. Removal of H(2)O(2), oxidation of toxic reductants, biosynthesis and degradation of lignin, suberization, auxin catabolism, response to environmental stresses such as wounding, pathogen attack and oxidative stress. These functions might be dependent on each isozyme/isoform in each plant tissue. In terms of biological role, closely linked to lignin formation by showing monolignol substrate specificity. The polypeptide is Peroxidase 53 (PER53) (Arabidopsis thaliana (Mouse-ear cress)).